The following is an 878-amino-acid chain: MNQQYSAMRSNVSMLGKLLGDTIKEALGEDILDKVETIRKLSKSSRAGNEAHRQQLLSTLQNLSNNELLPVARAFNQFLNLTNVAEQYHSISPHGEAASNPVALAKLFTRLKEKNFNNGDLKKAVNELSIELVLTAHPTEIARRTLIHKLVAVNTCLSQLDHDDLADYERNNIMRRLRQLVAQSWHTDEIRKIRPTPIDEAKWGFAMVENSLWEGVPAFLREFNEQLEESIDYSLPVEAVPVRFTSWMGGDRDGNPNVTAEVTRHVLLLSRWKAADLFLKDIQVLVSELSMSECTPEVRKLAGGDEILEPYREIAKKLRTQLSNTLTYLEKQLKGEQVLPPTDLLVDNEQLWQPLYACYQSLKTCGMEIIANGQLLDILRRIRCFGLSLVRIDVRQESTRHTTAISELTQYLELGDYASWSEEEKQAFLLYELHSKRPLIPHNWQPSAETQEVFATCKVIAESPQDAIAAYVISMAKAPSDVLAVHLLLKEAGCPFTLPVAPLFETLDDLNNAENIIQQLMNIQWYRELIHDKQMVMIGYSDSAKDAGVMAAAWAQYRAQDALINVCEKEGITLTLFHGRGGTIGRGGAPAHAALLSQPPGSLKGGLRVTEQGEMIRFKFGLPQVTISSLALYASAILEANLLPPPEPKPEWHQVMDTLSDVSCKMYRDYVREQPDFVPYFRAATPEQELAKLPLGSRPAKRHPAGGVESLRAIPWIFAWTQNRLMLPAWLGAGAALQQVVNDGKQDVLAEMCRDWPFFTTRIGMLEMVFAKADLWLAEYYDHRLVDKNLWPLGQKLRKQLSADIKTVLAISKDEHLMADLPWIAESIALRNVYTDPLNVLQVELLLRSRQQQYSDPQVEQALMVTIAGIAAGMRNTG.

Catalysis depends on residues histidine 137 and lysine 545.

The protein belongs to the PEPCase type 1 family. Mg(2+) serves as cofactor.

The enzyme catalyses oxaloacetate + phosphate = phosphoenolpyruvate + hydrogencarbonate. In terms of biological role, forms oxaloacetate, a four-carbon dicarboxylic acid source for the tricarboxylic acid cycle. The protein is Phosphoenolpyruvate carboxylase of Photorhabdus laumondii subsp. laumondii (strain DSM 15139 / CIP 105565 / TT01) (Photorhabdus luminescens subsp. laumondii).